The following is a 295-amino-acid chain: Cyclin-G1 (295 aa).

The protein belongs to the cyclin family. Cyclin G subfamily.

It localises to the nucleus. May play a role in growth regulation. Is associated with G2/M phase arrest in response to DNA damage. May be an intermediate by which p53 mediates its role as an inhibitor of cellular proliferation. The chain is Cyclin-G1 (CCNG1) from Pongo abelii (Sumatran orangutan).